A 544-amino-acid polypeptide reads, in one-letter code: Chaperonin GroEL (544 aa).

ATP-binding positions include 30-33, K51, 87-91, G415, and D495; these read TLGP and DGTTT.

The protein belongs to the chaperonin (HSP60) family. In terms of assembly, forms a cylinder of 14 subunits composed of two heptameric rings stacked back-to-back. Interacts with the co-chaperonin GroES.

The protein localises to the cytoplasm. The catalysed reaction is ATP + H2O + a folded polypeptide = ADP + phosphate + an unfolded polypeptide.. In terms of biological role, together with its co-chaperonin GroES, plays an essential role in assisting protein folding. The GroEL-GroES system forms a nano-cage that allows encapsulation of the non-native substrate proteins and provides a physical environment optimized to promote and accelerate protein folding. The sequence is that of Chaperonin GroEL from Neisseria meningitidis serogroup A / serotype 4A (strain DSM 15465 / Z2491).